The chain runs to 217 residues: Oxygen-evolving enhancer protein 3, chloroplastic (217 aa).

Disordered regions lie at residues 1-25 and 73-95; these read MAQA…RRAG and PIKL…SDQA. Residues 1-63 constitute a chloroplast transit peptide; it reads MAQAMASMTG…ATGIAGGALA (63 aa).

This sequence belongs to the PsbQ family.

Its subcellular location is the plastid. It is found in the chloroplast thylakoid membrane. The protein is Oxygen-evolving enhancer protein 3, chloroplastic of Oryza sativa subsp. indica (Rice).